We begin with the raw amino-acid sequence, 1512 residues long: MSPLLPTHWGASAPQNEPTLPSPSHSVSTRVGDEEKLRRSEGSDGEDRINLDSNKYDVKGMKETEDGGANKQVMVVFEQKSGKELEKPIEEGPFTQPRWRHSLPFVKPKHPPPPPPLSLDDAPVTPEVSANFFNLLFFNWISPMMALGSARPLQDADLWRMDAARGAKPLSEKLLASYAARTKKANEYNARLADPNTPLPFSRRILYSVLPHREQREKDYRKKHGKKHASLAMSLLDVFGWFFMSAGFIKVFGDTCQAVTPLVIRRLINWSANYQAAKSAGLDLPSRGPGIGAAIGLLLLLICSSLGMHHYFIRSMGTGVLSRAAIISAVYQQALQFTQKSRGQIPNGKLVNHISTDTSRIDFAAGFSHMLWTAPVQMIVIIIILIVQIGYSALPGIAFLLVMTPLQARFMKTLFMFRKKAATWTDKRAKLLQEILGGMRIVKYMAWEKPFLERIHAIRSMELKYIRLLLIFRSGMTAIAMSLPILAAILSFITYSLTSHSLEAAKIFTVITLFNLMRMPLMMWPMTLSSTADALNALGRLEAVFDAELVKEEKKVDPSMDVAIRLENASFTWDSAPIEEDNMMSKLTGKYAKVLNGGKPGGPPGKKEKKNKPKKVTAAEEIQAETAAGQPGAGEASAEGQGQKNPSAPGIDEEISEKKEVEIFQLRDINLNIPKGSLTAIVGAIGSGKSSLLQGLMGEMRRTTGSVTFSGSTSLCAQTPWIQNATVRENILFGQPWDEERYWAAIRDSSLEADLELLEDGDGTEIGEKGINLSGGQKQRVNIARAIYYNADIIALDDPLSALDAGVGKAIFFNAIINALSGKTRVLVTHALHLLPYVDNIIMMEDGKIGEVGTYRELKERNGAFAKLIKEFGNEELAEEKMETEEEAVESSGPTVTHDRANMMSKGSAHTLMQTEERNVGALKKGTFFDYLKAGKGVFMLPLLFFCIVVAQSFYVITSFWLVWWEETKWPQPNGFYMGIYAGLGVGLAIALFFQGFSNALINYFASVNIHHNAISRVMLAPQTFFDTTPLGRIMNRFSKDTDTIDNTLSDAMRMAISTLANIVGSVILLAIIEPYFLIAMAVVSLLYLHNAMFYRRSSREFKRIDSILRSSLYSHFSESLSGVATIRSYGETARFFEDNIHRVDIENRAYYLTIVNQRWLGLRLDFLGSLLSFSVAIIVVCSSSVSASNGGLGLSTIVSVQQAFSWLVRQIAEVENDMVGAERIMHYANELEQESPHQIEGTKPPASWPSEGTIEFKDVRMRYRPELPDVLKGLTLNVGASEKIGVVGRTGAGKSSIMVALFRMSELSHGFIKIDGVDVSKVGLNDLRSGISIIPQDPLLFSGTLRSNIDPFNTKTDAELYDTLRRSHLIGSSDSSHNSDSQNRFNLDTVIEEEGGNLSVGERSLVSLARALVRNTKVLVLDEATASVDLETDAKIQETIRQEFRDRTLLCIAHRLKTILAYDRILVMSDGQVAEFDTPENLFLSGGIFTEMCSKANISLADIKAAAALRF.

A disordered region spans residues 1-68; the sequence is MSPLLPTHWG…KGMKETEDGG (68 aa). Over residues 13-29 the composition is skewed to polar residues; sequence APQNEPTLPSPSHSVST. Basic and acidic residues predominate over residues 31–65; it reads VGDEEKLRRSEGSDGEDRINLDSNKYDVKGMKETE. 5 helical membrane-spanning segments follow: residues 229–249, 288–308, 363–385, 475–495, and 507–527; these read ASLA…AGFI, GPGI…SLGM, FAAG…IIIL, GMTA…FITY, and IFTV…WPMT. Positions 246 to 533 constitute an ABC transmembrane type-1 1 domain; that stretch reads AGFIKVFGDT…WPMTLSSTAD (288 aa). The tract at residues 594–656 is disordered; the sequence is VLNGGKPGGP…SAPGIDEEIS (63 aa). Positions 619–643 are enriched in low complexity; that stretch reads AEEIQAETAAGQPGAGEASAEGQGQ. An ABC transporter 1 domain is found at 651-871; sequence IDEEISEKKE…NGAFAKLIKE (221 aa). 683-690 is an ATP binding site; sequence GAIGSGKS. Transmembrane regions (helical) follow at residues 937–957, 974–994, 1067–1087, and 1167–1187; these read GVFM…FYVI, NGFY…ALFF, VILL…VSLL, and FLGS…SSVS. Positions 943–1217 constitute an ABC transmembrane type-1 2 domain; it reads LLFFCIVVAQ…LVRQIAEVEN (275 aa). An ABC transporter 2 domain is found at 1255-1496; the sequence is IEFKDVRMRY…GGIFTEMCSK (242 aa). ATP is bound at residue 1289–1296; the sequence is GRTGAGKS.

Belongs to the ABC transporter superfamily. ABCC family. Conjugate transporter (TC 3.A.1.208) subfamily.

Its subcellular location is the extracellular vesicle membrane. The protein localises to the secreted. In terms of biological role, transmembrane transporter. May play a role in the packaging or formation of extracellular vesicles (EVs), and in the export of virulence factors from EVs. Required for efficient non-lytic exocytosis from host macrophages, the process by which the yeast escapes host macrophages with both host cell and pathogen remaining viable. This Cryptococcus neoformans var. grubii serotype A (strain H99 / ATCC 208821 / CBS 10515 / FGSC 9487) (Filobasidiella neoformans var. grubii) protein is ATP-dependent permease YOR1.